The primary structure comprises 158 residues: Mitochondrial import inner membrane translocase subunit TIM14 (158 aa).

The Mitochondrial intermembrane portion of the chain corresponds to 1–55 (MAPPTIEIPQLPIPGEDNSAHPAQQIRLEQAAVPQQKRGMDLYFDKVVDFVGEHP). Residues 56-78 (VVGGIGGFVALYAAAGLWRAVSI) form a helical membrane-spanning segment. The Mitochondrial matrix portion of the chain corresponds to 79–158 (RMNGGKEATK…DFLEKRGIRK (80 aa)). A J domain is found at 102–158 (EALAILNLTESTLTKKRVKDVHRKIMLANHPDKGGSPYLATKINEAKDFLEKRGIRK).

The protein belongs to the TIM14 family. As to quaternary structure, heterodimer with PAM16. Component of the PAM complex, at least composed of mtHsp70, MGE1, TIM44, PAM16, PAM17 and PAM18.

The protein resides in the mitochondrion inner membrane. Essential component of the PAM complex, a complex required for the translocation of transit peptide-containing proteins from the inner membrane into the mitochondrial matrix in an ATP-dependent manner. In the complex, it is required to stimulate activity of mtHSP70 (SSC1). This Eremothecium gossypii (strain ATCC 10895 / CBS 109.51 / FGSC 9923 / NRRL Y-1056) (Yeast) protein is Mitochondrial import inner membrane translocase subunit TIM14 (PAM18).